The chain runs to 794 residues: Histone-lysine N-methyltransferase, H3 lysine-9 specific SUVH5 (794 aa).

2 disordered regions span residues Val-187 to Ile-210 and Ser-254 to Glu-276. Positions Asn-194–Gly-203 are enriched in polar residues. The segment covering Pro-258–Glu-276 has biased composition (basic and acidic residues). The YDG domain maps to Gly-365–Arg-515. One can recognise a Pre-SET domain in the interval Lys-585–Gly-644. Residues Ile-647–Asn-764 form the SET domain. The Post-SET domain maps to Lys-778–Tyr-794.

This sequence belongs to the class V-like SAM-binding methyltransferase superfamily. Histone-lysine methyltransferase family. Suvar3-9 subfamily. In terms of tissue distribution, expressed in leaves stems and flowers.

It localises to the nucleus. It is found in the chromosome. Its subcellular location is the centromere. The catalysed reaction is N(6)-methyl-L-lysyl(9)-[histone H3] + S-adenosyl-L-methionine = N(6),N(6)-dimethyl-L-lysyl(9)-[histone H3] + S-adenosyl-L-homocysteine + H(+). The enzyme catalyses L-lysyl(9)-[histone H3] + S-adenosyl-L-methionine = N(6)-methyl-L-lysyl(9)-[histone H3] + S-adenosyl-L-homocysteine + H(+). Functionally, histone methyltransferase. Methylates 'Lys-9' of histone H3. H3 'Lys-9' methylation represents a specific tag for epigenetic transcriptional repression. This chain is Histone-lysine N-methyltransferase, H3 lysine-9 specific SUVH5 (SUVH5), found in Arabidopsis thaliana (Mouse-ear cress).